Reading from the N-terminus, the 408-residue chain is Voltage-gated potassium channel subunit beta-1 (408 aa).

The NADP(+) site is built by Thr-97, Trp-98, Gln-104, and Asp-126. Residue Tyr-131 is the Proton donor/acceptor of the active site. NADP(+) contacts are provided by Asn-199, Ser-229, Arg-230, Gln-255, Trp-284, Ser-285, Pro-286, Leu-287, Ala-288, Cys-289, Lys-295, Arg-305, Gly-364, Ser-366, Gln-370, Glu-373, and Asn-374.

It belongs to the shaker potassium channel beta subunit family. Homotetramer. Interaction with tetrameric potassium channel alpha subunits gives rise to a heterooctamer. Identified in potassium channel complexes containing KCNA1, KCNA2, KCNA4, KCNA5, KCNA6, KCNAB1 and KCNAB2. Part of a complex containing KCNA1, KCNA4 and LGI1; interaction with LGI1 inhibits down-regulation of KCNA1 channel activity. Interacts with the dimer formed by GNB1 and GNG2; this enhances KCNA1 binding. Interacts with SQSTM1. Expression most abundant in aorta. Also high in left ventricle. Also detected in right ventricle, atrium, brain, skeletal muscle and kidney. Not detected in liver.

The protein resides in the cytoplasm. The protein localises to the membrane. It localises to the cell membrane. The enzyme catalyses a primary alcohol + NADP(+) = an aldehyde + NADPH + H(+). It carries out the reaction a secondary alcohol + NADP(+) = a ketone + NADPH + H(+). Functionally, regulatory subunit of the voltage-gated potassium (Kv) Shaker channels composed of pore-forming and potassium-conducting alpha subunits and of regulatory beta subunits. The beta-1/KCNAB1 cytoplasmic subunit mediates closure of delayed rectifier potassium channels by physically obstructing the pore via its N-terminal domain and increases the speed of channel closure for other family members. Promotes the inactivation of Kv1.1/KCNA1, Kv1.2/KCNA2, Kv1.4/KCNA4, Kv1.5/KCNA5 and Kv1.6/KCNA6 alpha subunit-containing channels. Displays nicotinamide adenine dinucleotide phosphate (NADPH)-dependent aldoketoreductase activity by catalyzing the NADPH-dependent reduction of a variety of endogenous aldehydes and ketones. The binding of NADPH is required for efficient down-regulation of potassium channel activity. Oxidation of the bound NADPH restrains N-terminal domain from blocking the channel, thereby decreasing N-type inactivation of potassium channel activity. This chain is Voltage-gated potassium channel subunit beta-1 (KCNAB1), found in Mustela putorius (European polecat).